Here is a 166-residue protein sequence, read N- to C-terminus: Phosphopantetheine adenylyltransferase (166 aa).

T10 is a binding site for substrate. ATP-binding positions include 10 to 11 (TF) and H18. Positions 42, 75, and 89 each coordinate substrate. Residues 90–92 (GVR), E100, and 125–131 (YTYVAST) each bind ATP.

This sequence belongs to the bacterial CoaD family. In terms of assembly, homohexamer. Mg(2+) is required as a cofactor.

Its subcellular location is the cytoplasm. It carries out the reaction (R)-4'-phosphopantetheine + ATP + H(+) = 3'-dephospho-CoA + diphosphate. It functions in the pathway cofactor biosynthesis; coenzyme A biosynthesis; CoA from (R)-pantothenate: step 4/5. Functionally, reversibly transfers an adenylyl group from ATP to 4'-phosphopantetheine, yielding dephospho-CoA (dPCoA) and pyrophosphate. This is Phosphopantetheine adenylyltransferase from Chlorobaculum parvum (strain DSM 263 / NCIMB 8327) (Chlorobium vibrioforme subsp. thiosulfatophilum).